The sequence spans 386 residues: MAKPVSIEVYNPNGKYRVVSTKPMPGTRWINLLVDQGCRVEICHLKKTILSVEDIIDLIGDKCDGVIGQLTEDWGETLFSALSKAGGKAFSNMAVGYNNVDVEAANKYGIAVGNTPGVLTETTAELAASLSLAAARRIVEADEFMRGGLYEGWLPHLFVGNLLKGQTVGVIGAGRIGSAYARMMVEGFKMNLIYFDLYQSTRLEKFVTAYGQFLKANGEQPVTWKRASSMEEVLREADLISLHPVLDKTTYHLVNKERLAMMKKEAILVNCSRGPVIDEAALVEHLKENPMFRVGLDVFEEEPFMKPGLADTKNAIVVPHIASASKWTREGMATLAALNVLGRVKGYPIWHDPNRVDPFLNENASPPNASPSIVNSKALGLPVSKL.

Residues 175–176, 271–273, and D297 each bind NAD(+); these read RI and CSR. Residue R273 is part of the active site. E302 is an active-site residue. H320 (proton donor) is an active-site residue. 320–323 provides a ligand contact to NAD(+); it reads HIAS. A Microbody targeting signal motif is present at residues 384–386; the sequence is SKL.

Belongs to the D-isomer specific 2-hydroxyacid dehydrogenase family. As to expression, present in leaves (at protein level). Mostly expressed in photosynthetic tissues such as leaves, stems, flowers, buds, and, to a lower extent, in siliques and roots.

It localises to the peroxisome. It catalyses the reaction (R)-glycerate + NAD(+) = 3-hydroxypyruvate + NADH + H(+). It participates in photosynthesis; photorespiration; 3-phospho-D-glycerate from glycine: step 3/4. With respect to regulation, slightly inhibited by oxalate. Catalyzes the NADH-dependent reduction of hydroxypyruvate into glycerate in the photorespiratory core cycle. Mediates fatty acid beta-oxidation in germinating seeds when malate dehydrogenase is absent. The polypeptide is Glycerate dehydrogenase HPR, peroxisomal (HPR) (Arabidopsis thaliana (Mouse-ear cress)).